A 253-amino-acid polypeptide reads, in one-letter code: 5-oxoprolinase subunit A (253 aa).

This sequence belongs to the LamB/PxpA family. As to quaternary structure, forms a complex composed of PxpA, PxpB and PxpC.

It carries out the reaction 5-oxo-L-proline + ATP + 2 H2O = L-glutamate + ADP + phosphate + H(+). Catalyzes the cleavage of 5-oxoproline to form L-glutamate coupled to the hydrolysis of ATP to ADP and inorganic phosphate. The chain is 5-oxoprolinase subunit A from Ruegeria pomeroyi (strain ATCC 700808 / DSM 15171 / DSS-3) (Silicibacter pomeroyi).